The chain runs to 242 residues: Large ribosomal subunit protein uL3 (242 aa).

Residues 131–165 (GRATHGNSVSHRTHGSTGQRQDPGKVFKGKKMAGH) are disordered. Residues 135-150 (HGNSVSHRTHGSTGQR) are compositionally biased toward polar residues. Gln-151 bears the N5-methylglutamine mark.

It belongs to the universal ribosomal protein uL3 family. Part of the 50S ribosomal subunit. Forms a cluster with proteins L14 and L19. In terms of processing, methylated by PrmB.

Its function is as follows. One of the primary rRNA binding proteins, it binds directly near the 3'-end of the 23S rRNA, where it nucleates assembly of the 50S subunit. This is Large ribosomal subunit protein uL3 from Chelativorans sp. (strain BNC1).